Here is a 317-residue protein sequence, read N- to C-terminus: Methionyl-tRNA formyltransferase (317 aa).

(6S)-5,6,7,8-tetrahydrofolate is bound at residue serine 112–proline 115.

Belongs to the Fmt family.

The enzyme catalyses L-methionyl-tRNA(fMet) + (6R)-10-formyltetrahydrofolate = N-formyl-L-methionyl-tRNA(fMet) + (6S)-5,6,7,8-tetrahydrofolate + H(+). In terms of biological role, attaches a formyl group to the free amino group of methionyl-tRNA(fMet). The formyl group appears to play a dual role in the initiator identity of N-formylmethionyl-tRNA by promoting its recognition by IF2 and preventing the misappropriation of this tRNA by the elongation apparatus. The protein is Methionyl-tRNA formyltransferase of Mannheimia succiniciproducens (strain KCTC 0769BP / MBEL55E).